The chain runs to 65 residues: Large ribosomal subunit protein bL35 (65 aa).

The disordered stretch occupies residues 23 to 44; it reads KRMKAGKQHILTKKSQKTKRNL.

Belongs to the bacterial ribosomal protein bL35 family.

This is Large ribosomal subunit protein bL35 from Lachnoclostridium phytofermentans (strain ATCC 700394 / DSM 18823 / ISDg) (Clostridium phytofermentans).